Here is a 456-residue protein sequence, read N- to C-terminus: Protein disulfide-isomerase TMX3 (456 aa).

The first 29 residues, 1–29 (MANAVGRRSWAALRLCAAVILLDLAVCKG), serve as a signal peptide directing secretion. One can recognise a Thioredoxin domain in the interval 30–131 (FVEDLNESFK…KDDIIEFAHR (102 aa)). Residues 30–378 (FVEDLNESFK…TIVSIFKSSP (349 aa)) lie on the Lumenal side of the membrane. Residue N35 is glycosylated (N-linked (GlcNAc...) asparagine). Active-site nucleophile residues include C56 and C59. C56 and C59 are oxidised to a cystine. N-linked (GlcNAc...) asparagine glycosylation is found at N261 and N316. Residues 379 to 399 (LMGCFLFGLPLGVISIMCYGI) form a helical membrane-spanning segment. Residues 400 to 456 (YTADTDGGYIEERYEVSKSEMENQEQIEESKEQESSSGGSLAPTVQEPKDVLEKKKD) lie on the Cytoplasmic side of the membrane. Residues 416-456 (SKSEMENQEQIEESKEQESSSGGSLAPTVQEPKDVLEKKKD) are disordered. Positions 446–456 (EPKDVLEKKKD) are enriched in basic and acidic residues. The short motif at 453–456 (KKKD) is the Di-lysine motif element.

The protein belongs to the protein disulfide isomerase family.

The protein localises to the endoplasmic reticulum membrane. It catalyses the reaction Catalyzes the rearrangement of -S-S- bonds in proteins.. Probable disulfide isomerase, which participates in the folding of proteins containing disulfide bonds. May act as a dithiol oxidase. Acts as a regulator of endoplasmic reticulum-mitochondria contact sites via its ability to regulate redox signals. This chain is Protein disulfide-isomerase TMX3 (Tmx3), found in Mus musculus (Mouse).